The primary structure comprises 288 residues: Phytanoyl-CoA dioxygenase domain-containing protein 1 homolog (288 aa).

2-oxoglutarate contacts are provided by residues lysine 95, methionine 134, 149-151 (HVD), and tryptophan 167. Residues histidine 149 and aspartate 151 each contribute to the Fe cation site. Fe cation is bound at residue histidine 242. Residues serine 244 and arginine 253 each contribute to the 2-oxoglutarate site.

The protein belongs to the PhyH family. PHYHD1 subfamily. Fe cation serves as cofactor.

Its function is as follows. Has alpha-ketoglutarate-dependent dioxygenase activity. Does not show detectable activity towards fatty acid CoA thioesters. Is not expected to be active with phytanoyl CoA. This chain is Phytanoyl-CoA dioxygenase domain-containing protein 1 homolog, found in Caenorhabditis elegans.